Reading from the N-terminus, the 238-residue chain is Ribosomal RNA small subunit methyltransferase G (238 aa).

S-adenosyl-L-methionine contacts are provided by residues glycine 77, phenylalanine 82, alanine 128–glutamate 129, and arginine 147.

Belongs to the methyltransferase superfamily. RNA methyltransferase RsmG family.

It is found in the cytoplasm. Specifically methylates the N7 position of guanine in position 535 of 16S rRNA. The polypeptide is Ribosomal RNA small subunit methyltransferase G (Listeria monocytogenes serotype 4b (strain CLIP80459)).